A 360-amino-acid chain; its full sequence is Meiotic drive suppressor wtf13 (360 aa).

Polar residues-rich tracts occupy residues 1 to 10 and 58 to 70; these read MKNNYTSLKS and DSST…TNPN. 2 disordered regions span residues 1–20 and 37–75; these read MKNN…ELKT and EEEG…ERRQ. 8 helical membrane-spanning segments follow: residues 90 to 110, 120 to 140, 150 to 170, 186 to 206, 222 to 242, 246 to 266, 276 to 296, and 310 to 330; these read LLIS…CVNP, AFSV…FCFF, CIKV…ISLA, DLVV…FGCV, SSIS…IWTL, LFGL…TKGL, ATGY…LFFY, and FIGN…RGIA.

Belongs to the WTF family. Homomer. Interacts with other proteins that exhibit high sequence similarity.

Its subcellular location is the spore membrane. The protein resides in the vacuole membrane. Acts as a suppressor component of the dual wtf meiotic drive system, and can suppress but not confer meiotic drive by compatible poisons. Wtf meiotic drive systems promote unequal transmission of alleles from the parental zygote to progeny spores by encoding a poison and an antidote from the same locus; the poison is trans-acting and forms toxic aggregates in all spores within an ascus, wherease the antidote is spore-specific and targets aggregates for degradation by the vacuole. Meiotic drive by wtf systems therefore lead to poisoning of all progeny that do not inherit the dual poison/antidote allele, or express a compatible antidote. This is Meiotic drive suppressor wtf13 from Schizosaccharomyces kambucha (Fission yeast).